The primary structure comprises 492 residues: Ketol-acid reductoisomerase (NADP(+)) (492 aa).

A KARI N-terminal Rossmann domain is found at 14–208; that stretch reads LDQLGRCRFM…GGHKAGVLES (195 aa). NADP(+)-binding positions include 45–48, R68, R76, S78, and 108–110; these read CGAQ and DKQ. The active site involves H132. G158 lines the NADP(+) pocket. 2 consecutive KARI C-terminal knotted domains span residues 209–344 and 345–485; these read SFVA…NAPK and YDGK…MTDM. Positions 217, 221, 389, and 393 each coordinate Mg(2+). Residue S414 participates in substrate binding.

This sequence belongs to the ketol-acid reductoisomerase family. It depends on Mg(2+) as a cofactor.

It catalyses the reaction (2R)-2,3-dihydroxy-3-methylbutanoate + NADP(+) = (2S)-2-acetolactate + NADPH + H(+). The enzyme catalyses (2R,3R)-2,3-dihydroxy-3-methylpentanoate + NADP(+) = (S)-2-ethyl-2-hydroxy-3-oxobutanoate + NADPH + H(+). It participates in amino-acid biosynthesis; L-isoleucine biosynthesis; L-isoleucine from 2-oxobutanoate: step 2/4. Its pathway is amino-acid biosynthesis; L-valine biosynthesis; L-valine from pyruvate: step 2/4. Functionally, involved in the biosynthesis of branched-chain amino acids (BCAA). Catalyzes an alkyl-migration followed by a ketol-acid reduction of (S)-2-acetolactate (S2AL) to yield (R)-2,3-dihydroxy-isovalerate. In the isomerase reaction, S2AL is rearranged via a Mg-dependent methyl migration to produce 3-hydroxy-3-methyl-2-ketobutyrate (HMKB). In the reductase reaction, this 2-ketoacid undergoes a metal-dependent reduction by NADPH to yield (R)-2,3-dihydroxy-isovalerate. The protein is Ketol-acid reductoisomerase (NADP(+)) of Haemophilus influenzae (strain PittEE).